The primary structure comprises 227 residues: MAYPAQMGFQDATSPIMEELLYFHDHTLMIVFMISSLVLYTISLMLTTSLTHTNTMNAQEVETVWTILPAIICILIALPSLRILYMMDEINNPSLTIKTMGHQWYWTYEYTDYENMTFDSYMTSTNDLTPGELRLLEVDNRMVLPTELPIRVLVSSEDVLHSWTVPSLGLKTDAIPGRLNQTTLMASRPGLYYGQCSEICGANHSFMPIVLELIPLKYFEKWLLTML.

The Mitochondrial intermembrane segment spans residues 1 to 14; sequence MAYPAQMGFQDATS. Residues 15–45 traverse the membrane as a helical segment; the sequence is PIMEELLYFHDHTLMIVFMISSLVLYTISLM. Residues 46-59 are Mitochondrial matrix-facing; the sequence is LTTSLTHTNTMNAQ. A helical membrane pass occupies residues 60–87; that stretch reads EVETVWTILPAIICILIALPSLRILYMM. Topologically, residues 88–227 are mitochondrial intermembrane; that stretch reads DEINNPSLTI…YFEKWLLTML (140 aa). Cu cation contacts are provided by histidine 161, cysteine 196, glutamate 198, cysteine 200, histidine 204, and methionine 207. Glutamate 198 contributes to the Mg(2+) binding site. The residue at position 218 (tyrosine 218) is a Phosphotyrosine.

It belongs to the cytochrome c oxidase subunit 2 family. Component of the cytochrome c oxidase (complex IV, CIV), a multisubunit enzyme composed of 14 subunits. The complex is composed of a catalytic core of 3 subunits MT-CO1, MT-CO2 and MT-CO3, encoded in the mitochondrial DNA, and 11 supernumerary subunits COX4I, COX5A, COX5B, COX6A, COX6B, COX6C, COX7A, COX7B, COX7C, COX8 and NDUFA4, which are encoded in the nuclear genome. The complex exists as a monomer or a dimer and forms supercomplexes (SCs) in the inner mitochondrial membrane with NADH-ubiquinone oxidoreductase (complex I, CI) and ubiquinol-cytochrome c oxidoreductase (cytochrome b-c1 complex, complex III, CIII), resulting in different assemblies (supercomplex SCI(1)III(2)IV(1) and megacomplex MCI(2)III(2)IV(2)). Found in a complex with TMEM177, COA6, COX18, COX20, SCO1 and SCO2. Interacts with TMEM177 in a COX20-dependent manner. Interacts with COX20. Interacts with COX16. It depends on Cu cation as a cofactor.

It localises to the mitochondrion inner membrane. The enzyme catalyses 4 Fe(II)-[cytochrome c] + O2 + 8 H(+)(in) = 4 Fe(III)-[cytochrome c] + 2 H2O + 4 H(+)(out). Component of the cytochrome c oxidase, the last enzyme in the mitochondrial electron transport chain which drives oxidative phosphorylation. The respiratory chain contains 3 multisubunit complexes succinate dehydrogenase (complex II, CII), ubiquinol-cytochrome c oxidoreductase (cytochrome b-c1 complex, complex III, CIII) and cytochrome c oxidase (complex IV, CIV), that cooperate to transfer electrons derived from NADH and succinate to molecular oxygen, creating an electrochemical gradient over the inner membrane that drives transmembrane transport and the ATP synthase. Cytochrome c oxidase is the component of the respiratory chain that catalyzes the reduction of oxygen to water. Electrons originating from reduced cytochrome c in the intermembrane space (IMS) are transferred via the dinuclear copper A center (CU(A)) of subunit 2 and heme A of subunit 1 to the active site in subunit 1, a binuclear center (BNC) formed by heme A3 and copper B (CU(B)). The BNC reduces molecular oxygen to 2 water molecules using 4 electrons from cytochrome c in the IMS and 4 protons from the mitochondrial matrix. This is Cytochrome c oxidase subunit 2 (MT-CO2) from Daubentonia madagascariensis (Aye-aye).